The chain runs to 487 residues: Glutamate--tRNA ligase 2 (487 aa).

Positions 24 to 34 (PSPTGFLHIGG) match the 'HIGH' region motif. The short motif at 258–262 (KLSKR) is the 'KMSKS' region element. ATP is bound at residue Lys261.

Belongs to the class-I aminoacyl-tRNA synthetase family. Glutamate--tRNA ligase type 1 subfamily. In terms of assembly, monomer.

The protein resides in the cytoplasm. It catalyses the reaction tRNA(Glu) + L-glutamate + ATP = L-glutamyl-tRNA(Glu) + AMP + diphosphate. Its function is as follows. Catalyzes the attachment of glutamate to tRNA(Glu) in a two-step reaction: glutamate is first activated by ATP to form Glu-AMP and then transferred to the acceptor end of tRNA(Glu). This Novosphingobium aromaticivorans (strain ATCC 700278 / DSM 12444 / CCUG 56034 / CIP 105152 / NBRC 16084 / F199) protein is Glutamate--tRNA ligase 2.